We begin with the raw amino-acid sequence, 201 residues long: Two-component response regulator ORR9 (201 aa).

Positions 10–142 (HVLAVDDSLP…DMSKLKPHIL (133 aa)) constitute a Response regulatory domain. The residue at position 75 (aspartate 75) is a 4-aspartylphosphate. The tract at residues 149 to 201 (HYQQEQNLQSNSESNNSSNPTSENSSSSTSSNSHKRKAVDEEILPHTIRPRHS) is disordered. Low complexity predominate over residues 158–180 (SNSESNNSSNPTSENSSSSTSSN).

The protein belongs to the ARR family. Type-A subfamily. Two-component system major event consists of a His-to-Asp phosphorelay between a sensor histidine kinase (HK) and a response regulator (RR). In plants, the His-to-Asp phosphorelay involves an additional intermediate named Histidine-containing phosphotransfer protein (HPt). This multistep phosphorelay consists of a His-Asp-His-Asp sequential transfer of a phosphate group between first a His and an Asp of the HK protein, followed by the transfer to a conserved His of the HPt protein and finally the transfer to an Asp in the receiver domain of the RR protein.

Its function is as follows. Functions as a response regulator involved in His-to-Asp phosphorelay signal transduction system. Phosphorylation of the Asp residue in the receiver domain activates the ability of the protein to promote the transcription of target genes. Type-A response regulators seem to act as negative regulators of the cytokinin signaling. This chain is Two-component response regulator ORR9, found in Oryza sativa subsp. japonica (Rice).